The chain runs to 407 residues: Probable succinyl-diaminopimelate desuccinylase (407 aa).

Zn(2+) is bound at residue H72. D74 is an active-site residue. Residue D105 coordinates Zn(2+). E139 acts as the Proton acceptor in catalysis. Residues E140, E165, and H378 each coordinate Zn(2+).

This sequence belongs to the peptidase M20A family. It depends on Zn(2+) as a cofactor. Requires Co(2+) as cofactor.

It catalyses the reaction N-succinyl-(2S,6S)-2,6-diaminopimelate + H2O = (2S,6S)-2,6-diaminopimelate + succinate. Its pathway is amino-acid biosynthesis; L-lysine biosynthesis via DAP pathway; LL-2,6-diaminopimelate from (S)-tetrahydrodipicolinate (succinylase route): step 3/3. This chain is Probable succinyl-diaminopimelate desuccinylase (dapE), found in Staphylococcus aureus (strain MRSA252).